A 319-amino-acid chain; its full sequence is Type II methyltransferase M.RsrI (319 aa).

The span at 1-10 shows a compositional bias: basic residues; sequence MANRSHHNAG. Residues 1 to 32 form a disordered region; sequence MANRSHHNAGHRAMNALRKSGQKHSSESQLGS.

This sequence belongs to the N(4)/N(6)-methyltransferase family.

The enzyme catalyses a 2'-deoxyadenosine in DNA + S-adenosyl-L-methionine = an N(6)-methyl-2'-deoxyadenosine in DNA + S-adenosyl-L-homocysteine + H(+). With respect to regulation, strongly inhibited by N-ethylmaleimide, inactivated by MgCl(2) or MgSO(4). A beta subtype methylase, recognizes the double-stranded sequence 5'-GAATTC-3', methylates A-3 on both strands, and protects the DNA from cleavage by the RsrI endonuclease. This chain is Type II methyltransferase M.RsrI, found in Cereibacter sphaeroides (Rhodobacter sphaeroides).